The following is a 302-amino-acid chain: MFLQKTIRKKTVVQGIGIHSGDPCTLTFRPAPADTGVYFIRTDLPGSPSLKVTARNVQATSHQTTIGGPAFSVATIEHCVSALSALRIDNLFIELDGPEIPIGDGSARVFLEALLAVGIVEQDQPRKYCYITEPIYFSEGEKHAYVVPYHGLRLTVTIDFPNPTIGKQTIDLDINEQSFGRDVANARTFGFMKDVEALKSRGLAKGGSLDNCIVLDGENVVNPEGLRWADEFVRHKCLDALGDLVTLEMPLMGHVVLYKAGHDVMNKLVRKIWDSPTSYRHVELGADISDEVRRYTGWTVPV.

Residues His78, His235, and Asp239 each contribute to the Zn(2+) site. The active-site Proton donor is the His262.

Belongs to the LpxC family. Zn(2+) serves as cofactor.

It carries out the reaction a UDP-3-O-[(3R)-3-hydroxyacyl]-N-acetyl-alpha-D-glucosamine + H2O = a UDP-3-O-[(3R)-3-hydroxyacyl]-alpha-D-glucosamine + acetate. Its pathway is glycolipid biosynthesis; lipid IV(A) biosynthesis; lipid IV(A) from (3R)-3-hydroxytetradecanoyl-[acyl-carrier-protein] and UDP-N-acetyl-alpha-D-glucosamine: step 2/6. Functionally, catalyzes the hydrolysis of UDP-3-O-myristoyl-N-acetylglucosamine to form UDP-3-O-myristoylglucosamine and acetate, the committed step in lipid A biosynthesis. In Bdellovibrio bacteriovorus (strain ATCC 15356 / DSM 50701 / NCIMB 9529 / HD100), this protein is UDP-3-O-acyl-N-acetylglucosamine deacetylase.